We begin with the raw amino-acid sequence, 130 residues long: Small ribosomal subunit protein uS11 (130 aa).

It belongs to the universal ribosomal protein uS11 family. As to quaternary structure, part of the 30S ribosomal subunit. Interacts with proteins S7 and S18. Binds to IF-3.

Functionally, located on the platform of the 30S subunit, it bridges several disparate RNA helices of the 16S rRNA. Forms part of the Shine-Dalgarno cleft in the 70S ribosome. This is Small ribosomal subunit protein uS11 from Synechococcus sp. (strain CC9902).